Reading from the N-terminus, the 734-residue chain is 1,4-alpha-glucan branching enzyme GlgB (734 aa).

Asp414 acts as the Nucleophile in catalysis. Catalysis depends on Glu467, which acts as the Proton donor.

This sequence belongs to the glycosyl hydrolase 13 family. GlgB subfamily. As to quaternary structure, monomer.

It catalyses the reaction Transfers a segment of a (1-&gt;4)-alpha-D-glucan chain to a primary hydroxy group in a similar glucan chain.. The protein operates within glycan biosynthesis; glycogen biosynthesis. Functionally, catalyzes the formation of the alpha-1,6-glucosidic linkages in glycogen by scission of a 1,4-alpha-linked oligosaccharide from growing alpha-1,4-glucan chains and the subsequent attachment of the oligosaccharide to the alpha-1,6 position. This chain is 1,4-alpha-glucan branching enzyme GlgB, found in Myxococcus xanthus (strain DK1622).